Reading from the N-terminus, the 112-residue chain is Nucleoid-associated protein Pfl01_1806 (112 aa).

This sequence belongs to the YbaB/EbfC family. Homodimer.

It localises to the cytoplasm. The protein localises to the nucleoid. Functionally, binds to DNA and alters its conformation. May be involved in regulation of gene expression, nucleoid organization and DNA protection. This chain is Nucleoid-associated protein Pfl01_1806, found in Pseudomonas fluorescens (strain Pf0-1).